Reading from the N-terminus, the 242-residue chain is Acetoacetyl-CoA reductase (242 aa).

Residues 12–14 and 82–86 contribute to the NADP(+) site; these read RGI and NAGIT. Residues Asp88 and 141-144 each bind substrate; that span reads QAGQ. Tyr147 serves as the catalytic Proton acceptor. 177 to 180 is a binding site for NADP(+); sequence PGYI. Substrate is bound at residue 178–179; it reads GY.

This sequence belongs to the short-chain dehydrogenases/reductases (SDR) family.

It localises to the cytoplasm. It carries out the reaction a (3R)-3-hydroxyacyl-CoA + NADP(+) = a 3-oxoacyl-CoA + NADPH + H(+). It functions in the pathway biopolymer metabolism; poly-(R)-3-hydroxybutanoate biosynthesis. In Paracoccus denitrificans, this protein is Acetoacetyl-CoA reductase (phaB).